We begin with the raw amino-acid sequence, 301 residues long: Homoserine O-acetyltransferase (301 aa).

The active-site Acyl-thioester intermediate is cysteine 142. Residues lysine 163 and serine 192 each contribute to the substrate site. The active-site Proton acceptor is histidine 235. The active site involves glutamate 237. Arginine 249 contributes to the substrate binding site.

The protein belongs to the MetA family.

The protein resides in the cytoplasm. It catalyses the reaction L-homoserine + acetyl-CoA = O-acetyl-L-homoserine + CoA. It functions in the pathway amino-acid biosynthesis; L-methionine biosynthesis via de novo pathway; O-acetyl-L-homoserine from L-homoserine: step 1/1. Functionally, transfers an acetyl group from acetyl-CoA to L-homoserine, forming acetyl-L-homoserine. The chain is Homoserine O-acetyltransferase from Clostridium acetobutylicum (strain ATCC 824 / DSM 792 / JCM 1419 / IAM 19013 / LMG 5710 / NBRC 13948 / NRRL B-527 / VKM B-1787 / 2291 / W).